A 1007-amino-acid chain; its full sequence is Serine/threonine-protein kinase PRP4 homolog (1007 aa).

Residues 1–10 show a composition bias toward polar residues; that stretch reads MAAAETQSLR. The interval 1–99 is disordered; that stretch reads MAAAETQSLR…EGMSPAKRTK (99 aa). N-acetylalanine is present on Ala2. Residues Ser8, Ser20, Ser23, and Ser32 each carry the phosphoserine modification. 2 stretches are compositionally biased toward basic residues: residues 39 to 59 and 67 to 81; these read KHSR…KHKH and KKHK…HKRK. Residues 82-91 are compositionally biased toward basic and acidic residues; that stretch reads EVIDASDKEG. Phosphoserine is present on residues Ser87 and Ser93. Position 99 is an N6-acetyllysine; alternate (Lys99). Residue Lys99 forms a Glycyl lysine isopeptide (Lys-Gly) (interchain with G-Cter in SUMO2); alternate linkage. Lys111 is covalently cross-linked (Glycyl lysine isopeptide (Lys-Gly) (interchain with G-Cter in SUMO2)). Lys117 is covalently cross-linked (Glycyl lysine isopeptide (Lys-Gly) (interchain with G-Cter in SUMO2); alternate). A Glycyl lysine isopeptide (Lys-Gly) (interchain with G-Cter in SUMO1); alternate cross-link involves residue Lys117. Ser131 is subject to Phosphoserine. Tyr140 is modified (phosphotyrosine). Disordered regions lie at residues 140–533 and 559–583; these read YESG…EEED and SNMS…SPDD. A phosphoserine mark is found at Ser142, Ser144, and Ser166. The span at 157–168 shows a compositional bias: low complexity; that stretch reads GNRSSTRSSSTK. Glycyl lysine isopeptide (Lys-Gly) (interchain with G-Cter in SUMO2) cross-links involve residues Lys170 and Lys177. Composition is skewed to basic residues over residues 179 to 202 and 214 to 230; these read TTKK…KKSK and RSKS…SKRS. A phosphoserine mark is found at Ser239, Ser241, Ser257, Ser277, Ser283, Ser292, and Ser294. Residues 247–270 show a composition bias toward basic and acidic residues; sequence RSQEKIGKARSPTDDKVKIEDKSK. Residues 302 to 315 show a composition bias toward basic residues; that stretch reads SKDRRSRSKERKSK. Positions 316–325 are enriched in basic and acidic residues; that stretch reads RSETDKEKKP. A phosphoserine mark is found at Ser328, Ser354, Ser356, Ser366, and Ser368. Over residues 342–367 the composition is skewed to basic residues; the sequence is PSRRPGRSPKRRSLSPKPRDKSRRSR. Residue Thr385 is modified to Phosphothreonine. Ser387 is modified (phosphoserine). Basic and acidic residues-rich tracts occupy residues 395-408 and 415-429; these read RSLE…ERRR and RPRD…RSKD. Residues Ser427, Ser431, and Ser437 each carry the phosphoserine modification. The span at 438–497 shows a compositional bias: basic residues; that stretch reads PTRRRSRSPIRRRSRSPLRRSRSPRRRSRSPRRRDRGRRSRSRLRRRSRSRGGRRRRSRS. Phosphoserine occurs at positions 518, 519, 520, 565, 569, 578, and 580. The span at 518 to 533 shows a compositional bias: acidic residues; it reads SSSDDNLEDFDVEEED. Low complexity predominate over residues 562–581; the sequence is SVPSEPSSPQSSTRTRSPSP. Glycyl lysine isopeptide (Lys-Gly) (interchain with G-Cter in SUMO2) cross-links involve residues Lys593 and Lys659. The Protein kinase domain maps to 687 to 1003; sequence YNVYGYTGQG…INQALQHAFI (317 aa). ATP-binding positions include 693–701 and Lys717; that span reads TGQGVFSNV. The residue at position 717 (Lys717) is an N6-acetyllysine. The active-site Proton acceptor is the Asp815. Tyr849 bears the Phosphotyrosine mark. Ser852 bears the Phosphoserine mark.

This sequence belongs to the protein kinase superfamily. CMGC Ser/Thr protein kinase family. In terms of assembly, interacts with CLK1 C-terminus. Associates with the U5 snRNP and NCOR1 deacetylase complexes. Identified in the spliceosome C complex. Phosphorylated by CLK1. Autophosphorylated; phosphorylation inhibits interaction with its targets, such as PRPF6 or SMARCA4.

The protein localises to the nucleus. It is found in the chromosome. Its subcellular location is the centromere. It localises to the kinetochore. The catalysed reaction is L-seryl-[protein] + ATP = O-phospho-L-seryl-[protein] + ADP + H(+). The enzyme catalyses L-threonyl-[protein] + ATP = O-phospho-L-threonyl-[protein] + ADP + H(+). Serine/threonine kinase involved in spliceosomal assembly as well as mitosis and signaling regulation. Connects chromatin mediated regulation of transcription and pre-mRNA splicing. During spliceosomal assembly, interacts with and phosphorylates PRPF6 and PRPF31, components of the U4/U6-U5 tri-small nuclear ribonucleoprotein (snRNP), to facilitate the formation of the spliceosome B complex. Plays a role in regulating transcription and the spindle assembly checkpoint (SAC). Associates with U5 snRNP and NCOR1 deacetylase complexes which may allow a coordination of pre-mRNA splicing with chromatin remodeling events involved in transcriptional regulation. Associates and probably phosphorylates SMARCA4 and NCOR1. Phosphorylates SRSF1. Associates with kinetochores during mitosis and is necessary for recruitment and maintenance of the checkpoint proteins such as MAD1L1 and MAD12L1 at the kinetochores. Phosphorylates and regulates the activity of the transcription factors such as ELK1 and KLF13. Phosphorylates nuclear YAP1 and WWTR1/TAZ which induces nuclear exclusion and regulates Hippo signaling pathway, involved in tissue growth control. This is Serine/threonine-protein kinase PRP4 homolog (PRP4K) from Pongo abelii (Sumatran orangutan).